The sequence spans 214 residues: Endothelin-3 (214 aa).

A signal peptide spans 1 to 16 (MEPGLWLLLGLTVTSA). Positions 17 to 94 (AGLVPCPQSG…DKGLPAHHRP (78 aa)) are excised as a propeptide. A disordered region spans residues 24–91 (QSGDSGRASV…KQEDKGLPAH (68 aa)). A compositionally biased stretch (polar residues) spans 25–35 (SGDSGRASVSQ). Disulfide bonds link Cys97–Cys111 and Cys99–Cys107. Residues 118–214 (INTPEQTVPY…MSRTDKAHRP (97 aa)) constitute a propeptide that is removed on maturation. The tract at residues 159 to 173 (CTCMGADDKACAHFC) is endothelin-like. The disordered stretch occupies residues 183 to 214 (SGRAERPAAEEMRETGGPRQRLMSRTDKAHRP). Positions 185 to 198 (RAERPAAEEMRETG) are enriched in basic and acidic residues.

Belongs to the endothelin/sarafotoxin family.

The protein localises to the secreted. Endothelins are endothelium-derived vasoconstrictor peptides. The sequence is that of Endothelin-3 (Edn3) from Mus musculus (Mouse).